The following is an 819-amino-acid chain: MEAFLKEFGDYYGYPDGPKNIQEIRDTEFKRLDKGVVYLDHAGSTLYSELQMEYIFKDFTSNVFGNPHSQSDISSATSDLIADARHQVLEYFNASPEDYSCLFTSGATAALKLVGETFPWTQDSNFLYTMENHNSVLGIREYALAQGASACAVDIEEAANQPGQLTNSGPSIKVKHRAVQMRNTSKLQKEESRGNAYNLFAFPSECNFSGLRFNLDLVKLMKENTETVLQGSPFSKSKRWMVLIDAAKGCATLPPDLSEYPADFVVLSFYKLFGYPTGLGALLVRNDAAKLLKKTYFSGGTVAASIADIDFVKRRERVEEFFEDGSASFLSIAAIRHGFKLLKSLTPSAIWMHTTSLSIYVKKKLQALRHGNGAAVCVLYGSENLELSSHKSGPTVTFNLKRPDGSWFGYLEVEKLASLSGIQLRTGCFCNPGACAKYLELSHSELRSNVEAGHICWDDNDVINGKPTGAVRVSFGYMSTFEDAKKFIDFIISSFASPPKKTGNGTVVSGRFPQLPSEDLESKESFPSHYLKSITVYPIKSCAGFSVIRWPLCRTGLLHDREWMVQGLTGEILTQKKVPEMSLIKTFIDLEEGLLSVESSRCEDKLHIRIKSDSYNPRNDEFDSHANILENRNEETRINRWFTNAIGRQCKLLRYSSSTSKDCLNRNKSPGLCRDLESNINFANEAQFLLISEESVADLNRRLEAKDEDYKRAHEKLNPHRFRPNLVISGGEPYGEDKWKTVKIGDNHFTSLGGCNRCQMINISNEAGLVKKSNEPLTTLASYRRVKGKILFGTLLRYEIDEKRQCWIGVGEEVNPDIE.

K271 bears the N6-(pyridoxal phosphate)lysine mark. The active site involves C430. The MOSC domain occupies 650-817 (CKLLRYSSST…IGVGEEVNPD (168 aa)).

This sequence belongs to the class-V pyridoxal-phosphate-dependent aminotransferase family. MOCOS subfamily. Pyridoxal 5'-phosphate is required as a cofactor. As to expression, ubiquitously expressed.

It carries out the reaction Mo-molybdopterin + L-cysteine + AH2 = thio-Mo-molybdopterin + L-alanine + A + H2O. The protein operates within cofactor biosynthesis; molybdopterin biosynthesis. Functionally, sulfurates the molybdenum cofactor. Sulfation of molybdenum is essential for xanthine dehydrogenase (XDH) and aldehyde oxidase (ADO) enzymes in which molybdenum cofactor is liganded by 1 oxygen and 1 sulfur atom in active form. Modulates cold stress- and osmotic stress-responsive gene expression by acting as key regulator of abscisic acid (ABA) biosynthesis. This is Molybdenum cofactor sulfurase (ABA3) from Arabidopsis thaliana (Mouse-ear cress).